The primary structure comprises 420 residues: Corticotropin-releasing factor receptor 1 (420 aa).

Residues M1–A28 form the signal peptide. Over S29 to R116 the chain is Extracellular. Intrachain disulfides connect C35–C59, C49–C92, and C73–C107. 5 N-linked (GlcNAc...) asparagine glycosylation sites follow: N43, N50, N83, N95, and N103. A helical membrane pass occupies residues S117 to M147. Topologically, residues R148–C154 are cytoplasmic. Residues L155 to L179 form a helical membrane-spanning segment. Over T180–R194 the chain is Extracellular. C193 and C263 form a disulfide bridge. A helical transmembrane segment spans residues L195–V223. At L224 to K230 the chain is on the cytoplasmic side. The chain crosses the membrane as a helical span at residues L231 to Y258. At D259 to D274 the chain is on the extracellular side. The helical transmembrane segment at Y275–M300 threads the bilayer. The Cytoplasmic segment spans residues T301–T311. Residues I312–F336 form a helical membrane-spanning segment. The Extracellular segment spans residues V337–E343. Residues I344–S373 traverse the membrane as a helical segment. Residues E374–V420 lie on the Cytoplasmic side of the membrane.

It belongs to the G-protein coupled receptor 2 family. As to quaternary structure, interacts (via N-terminal extracellular domain) with CRF and UCN.

The protein localises to the cell membrane. Functionally, G-protein coupled receptor for CRH (corticotropin-releasing factor) and UCN (urocortin). Has high affinity for CRH and UCN. Ligand binding causes a conformation change that triggers signaling via guanine nucleotide-binding proteins (G proteins) and down-stream effectors, such as adenylate cyclase. Promotes the activation of adenylate cyclase, leading to increased intracellular cAMP levels. This Gallus gallus (Chicken) protein is Corticotropin-releasing factor receptor 1 (CRHR1).